The sequence spans 79 residues: Conotoxin Cal9.2a (79 aa).

Positions 1–23 (MNCYLILTVALLLTSAMTGTTTA) are cleaved as a signal peptide. A propeptide spanning residues 24-33 (GQLNKKGVTL) is cleaved from the precursor. Disulfide bonds link Cys-41/Cys-58, Cys-46/Cys-68, and Cys-48/Cys-73.

As to expression, expressed by the venom duct.

It localises to the secreted. Its function is as follows. Probable neurotoxin with unknown target. Possibly targets ion channels. This is Conotoxin Cal9.2a from Californiconus californicus (California cone).